We begin with the raw amino-acid sequence, 176 residues long: MDLPGPIHDILLVFLGSGLILGGLGVVLFTNPIFSAFSLGLVLVCISLFHILSNSYFVAAAQLLIYVGAVNVLIIFAVMFMNGSEYYNDFYLWTVGDGVTSLVCTSILFSLITTISDTSWYGIIWTTGSNQIIEQDLISNVQQIGIHLSTDFYLPFELISIILLVALIGAIAMARQ.

5 helical membrane-spanning segments follow: residues 10–30 (ILLV…VLFT), 32–52 (PIFS…FHIL), 61–81 (AQLL…VMFM), 92–112 (LWTV…FSLI), and 152–172 (FYLP…GAIA).

The protein belongs to the complex I subunit 6 family. In terms of assembly, NDH is composed of at least 16 different subunits, 5 of which are encoded in the nucleus.

The protein localises to the plastid. It localises to the chloroplast thylakoid membrane. It carries out the reaction a plastoquinone + NADH + (n+1) H(+)(in) = a plastoquinol + NAD(+) + n H(+)(out). The enzyme catalyses a plastoquinone + NADPH + (n+1) H(+)(in) = a plastoquinol + NADP(+) + n H(+)(out). NDH shuttles electrons from NAD(P)H:plastoquinone, via FMN and iron-sulfur (Fe-S) centers, to quinones in the photosynthetic chain and possibly in a chloroplast respiratory chain. The immediate electron acceptor for the enzyme in this species is believed to be plastoquinone. Couples the redox reaction to proton translocation, and thus conserves the redox energy in a proton gradient. This Drimys granadensis protein is NAD(P)H-quinone oxidoreductase subunit 6, chloroplastic (ndhG).